Consider the following 98-residue polypeptide: NADH-ubiquinone oxidoreductase chain 4L (98 aa).

Helical transmembrane passes span 1-21 (MPIIYTNIVLAFMISLLGMLI), 29-49 (SLLCLEGMMLSLFMMSTLMAL), and 58-78 (IVPIALLVFAACEAAVGLALL).

The protein belongs to the complex I subunit 4L family. In terms of assembly, core subunit of respiratory chain NADH dehydrogenase (Complex I) which is composed of 45 different subunits.

The protein localises to the mitochondrion inner membrane. The enzyme catalyses a ubiquinone + NADH + 5 H(+)(in) = a ubiquinol + NAD(+) + 4 H(+)(out). Core subunit of the mitochondrial membrane respiratory chain NADH dehydrogenase (Complex I) which catalyzes electron transfer from NADH through the respiratory chain, using ubiquinone as an electron acceptor. Part of the enzyme membrane arm which is embedded in the lipid bilayer and involved in proton translocation. The polypeptide is NADH-ubiquinone oxidoreductase chain 4L (MT-ND4L) (Nasalis larvatus (Proboscis monkey)).